Reading from the N-terminus, the 606-residue chain is Acetylcholinesterase (606 aa).

The signal sequence occupies residues 1 to 28 (MPSCQPGKMPAPWPWWLQLLLCIPSCVA). A disulfide bond links cysteine 98 and cysteine 125. Serine 231 (acyl-ester intermediate) is an active-site residue. Cysteines 285 and 296 form a disulfide. An N-linked (GlcNAc...) asparagine glycan is attached at asparagine 289. Catalysis depends on glutamate 358, which acts as the Charge relay system. Residue asparagine 374 is glycosylated (N-linked (GlcNAc...) asparagine). Cysteine 433 and cysteine 552 are disulfide-bonded. Catalysis depends on histidine 471, which acts as the Charge relay system. Residue asparagine 484 is glycosylated (N-linked (GlcNAc...) asparagine).

This sequence belongs to the type-B carboxylesterase/lipase family. As to quaternary structure, isoform S is monomeric. Isoform T can form oligomers, including collagen-tailed forms. The N-terminus is blocked. As to expression, liver and muscle contain both isoform T and isoform S. Venom gland predominantly contains isoform S.

It localises to the synapse. Its subcellular location is the secreted. The protein resides in the cell membrane. The catalysed reaction is acetylcholine + H2O = choline + acetate + H(+). With respect to regulation, inhibited by active site inhibitors: edrophonium, trimethyl-(m-acetamidopheny1)-ammonium iodide, and trimethyl-(p-acetarnidopheny1)-ammonium iodide. Inhibited by both active and peripheral site inhibitors: decamethonium, and BW284c51. Inhibited by peripheral site inhibitors: snake acetylcholinesterase fasciculin-2, propidium, gallamine, D-tubocurarine, and tacrine. Also inhibited by antibodies Elec410 and Fab410. Functionally, in muscle, it terminates signal transduction at the neuromuscular junction by rapid hydrolysis of the acetylcholine released into the synaptic cleft. In liver, its function is unclear: it could serve as a safeguard against any diffusion of acetylcholine from synapses into the circulation. In venom, its toxic role is unclear: it could result in less musculatory control by rapidly hydrolyzing acetylcholine, or that it works synergistically with alkaline phosphatase (ALP) in paralyzing prey through hypotension. The protein is Acetylcholinesterase (ACHE) of Bungarus fasciatus (Banded krait).